Reading from the N-terminus, the 369-residue chain is Glutamine synthetase (369 aa).

The region spanning 23-102 is the GS beta-grasp domain; sequence VIAEYIWVDS…VLAECWNNDG (80 aa). A GS catalytic domain is found at 109 to 369; that stretch reads HRHEAAKLFE…MSKEFERESS (261 aa).

This sequence belongs to the glutamine synthetase family. Homooctamer.

The protein resides in the cytoplasm. The catalysed reaction is L-glutamate + NH4(+) + ATP = L-glutamine + ADP + phosphate + H(+). The polypeptide is Glutamine synthetase (GLN1) (Eremothecium gossypii (strain ATCC 10895 / CBS 109.51 / FGSC 9923 / NRRL Y-1056) (Yeast)).